The sequence spans 169 residues: X polypeptide (169 aa).

It belongs to the IagB/IpgF/P19 family.

This is X polypeptide (yubQ) from Escherichia coli (strain K12).